The chain runs to 216 residues: Somatotropin (216 aa).

Residues 1–26 (MAASPRNSVLLAFALLCLPWPQEVGA) form the signal peptide. Residue histidine 45 coordinates Zn(2+). A disulfide bond links cysteine 78 and cysteine 189. Serine 131 carries the post-translational modification Phosphoserine. Glutamate 198 is a Zn(2+) binding site. A disulfide bond links cysteine 206 and cysteine 214.

Belongs to the somatotropin/prolactin family.

Its subcellular location is the secreted. In terms of biological role, plays an important role in growth control. Its major role in stimulating body growth is to stimulate the liver and other tissues to secrete IGF1. It stimulates both the differentiation and proliferation of myoblasts. It also stimulates amino acid uptake and protein synthesis in muscle and other tissues. This chain is Somatotropin (GH1), found in Canis lupus familiaris (Dog).